Here is a 420-residue protein sequence, read N- to C-terminus: Gamma-glutamyl phosphate reductase (420 aa).

Belongs to the gamma-glutamyl phosphate reductase family.

Its subcellular location is the cytoplasm. The catalysed reaction is L-glutamate 5-semialdehyde + phosphate + NADP(+) = L-glutamyl 5-phosphate + NADPH + H(+). The protein operates within amino-acid biosynthesis; L-proline biosynthesis; L-glutamate 5-semialdehyde from L-glutamate: step 2/2. Functionally, catalyzes the NADPH-dependent reduction of L-glutamate 5-phosphate into L-glutamate 5-semialdehyde and phosphate. The product spontaneously undergoes cyclization to form 1-pyrroline-5-carboxylate. The polypeptide is Gamma-glutamyl phosphate reductase (Cereibacter sphaeroides (strain ATCC 17029 / ATH 2.4.9) (Rhodobacter sphaeroides)).